Here is a 24-residue protein sequence, read N- to C-terminus: Tryptophanase operon leader peptide (24 aa).

In Escherichia coli O157:H7, this protein is Tryptophanase operon leader peptide (tnaL).